A 611-amino-acid polypeptide reads, in one-letter code: Probable potassium transport system protein Kup 1 (611 aa).

Helical transmembrane passes span L6–M26, M44–V64, L90–T110, I129–A149, L158–I178, G193–L213, W237–V257, L280–F300, I328–F348, L354–F374, L385–A405, and V410–T430.

This sequence belongs to the HAK/KUP transporter (TC 2.A.72) family.

The protein localises to the cell inner membrane. It catalyses the reaction K(+)(in) + H(+)(in) = K(+)(out) + H(+)(out). Transport of potassium into the cell. Likely operates as a K(+):H(+) symporter. The protein is Probable potassium transport system protein Kup 1 of Bradyrhizobium sp. (strain BTAi1 / ATCC BAA-1182).